The chain runs to 1088 residues: DNA-directed RNA polymerase subunit beta (1088 aa).

It belongs to the RNA polymerase beta chain family. In terms of assembly, in plastids the minimal PEP RNA polymerase catalytic core is composed of four subunits: alpha, beta, beta', and beta''. When a (nuclear-encoded) sigma factor is associated with the core the holoenzyme is formed, which can initiate transcription.

The protein resides in the plastid. It is found in the chloroplast. It carries out the reaction RNA(n) + a ribonucleoside 5'-triphosphate = RNA(n+1) + diphosphate. In terms of biological role, DNA-dependent RNA polymerase catalyzes the transcription of DNA into RNA using the four ribonucleoside triphosphates as substrates. This Ostreococcus tauri protein is DNA-directed RNA polymerase subunit beta.